Consider the following 142-residue polypeptide: Large ribosomal subunit protein uL23 (142 aa).

Lysine 61 is covalently cross-linked (Glycyl lysine isopeptide (Lys-Gly) (interchain with G-Cter in SUMO)).

Belongs to the universal ribosomal protein uL23 family. As to quaternary structure, component of the large ribosomal subunit (LSU). Mature yeast ribosomes consist of a small (40S) and a large (60S) subunit. The 40S small subunit contains 1 molecule of ribosomal RNA (18S rRNA) and 33 different proteins (encoded by 57 genes). The large 60S subunit contains 3 rRNA molecules (25S, 5.8S and 5S rRNA) and 46 different proteins (encoded by 81 genes). uL23 is associated with the polypeptide exit tunnel.

Its subcellular location is the cytoplasm. In terms of biological role, component of the ribosome, a large ribonucleoprotein complex responsible for the synthesis of proteins in the cell. The small ribosomal subunit (SSU) binds messenger RNAs (mRNAs) and translates the encoded message by selecting cognate aminoacyl-transfer RNA (tRNA) molecules. The large subunit (LSU) contains the ribosomal catalytic site termed the peptidyl transferase center (PTC), which catalyzes the formation of peptide bonds, thereby polymerizing the amino acids delivered by tRNAs into a polypeptide chain. The nascent polypeptides leave the ribosome through a tunnel in the LSU and interact with protein factors that function in enzymatic processing, targeting, and the membrane insertion of nascent chains at the exit of the ribosomal tunnel. uL23 is a major component of the universal docking site for these factors at the polypeptide exit tunnel. The protein is Large ribosomal subunit protein uL23 of Saccharomyces cerevisiae (strain ATCC 204508 / S288c) (Baker's yeast).